The chain runs to 365 residues: Green-sensitive opsin P521 (365 aa).

Topologically, residues 1–51 are extracellular; it reads MTEAWNVAVFAARRSRDDDDTTRGSVFTYTNTNNTRGPFEGPNYHIAPRWV. N-linked (GlcNAc...) asparagine glycosylation occurs at N33. The chain crosses the membrane as a helical span at residues 52–76; the sequence is YNLVSFFMIIVVIASCFTNGLVLVA. At 77–88 the chain is on the cytoplasmic side; the sequence is TAKFKKLRHPLN. Residues 89–113 traverse the membrane as a helical segment; that stretch reads WILVNLAFVDLVETLVASTISVFNQ. Topologically, residues 114 to 128 are extracellular; it reads IFGYFILGHPLCVIE. Cysteines 125 and 202 form a disulfide. A helical membrane pass occupies residues 129–148; sequence GYVVSSCGITGLWSLAIISW. The Cytoplasmic portion of the chain corresponds to 149 to 167; that stretch reads ERWFVVCKPFGNIKFDSKL. The helical transmembrane segment at 168–191 threads the bilayer; that stretch reads AIIGIVFSWVWAWGWSAPPIFGWS. Over 192–217 the chain is Extracellular; that stretch reads RYWPHGLKTSCGPDVFSGSVELGCQS. A helical membrane pass occupies residues 218-245; sequence FMLTLMITCCFLPLFIIIVCYLQVWMAI. Over 246–267 the chain is Cytoplasmic; sequence RAVAAQQKESESTQKAEREVSR. Residues 268 to 291 form a helical membrane-spanning segment; it reads MVVVMIVAFCICWGPYASFVSFAA. Topologically, residues 292 to 299 are extracellular; the sequence is ANPGYAFH. The chain crosses the membrane as a helical span at residues 300-324; it reads PLAAALPAYFAKSATIYNPVIYVFM. K311 bears the N6-(retinylidene)lysine mark. Topologically, residues 325–365 are cytoplasmic; sequence NRQFRNCIMQLFGKKVDDGSEASTTSRTEVSSVSNSSVAPA. The interval 342 to 365 is disordered; it reads DGSEASTTSRTEVSSVSNSSVAPA. The segment covering 345-365 has biased composition (low complexity); sequence EASTTSRTEVSSVSNSSVAPA.

It belongs to the G-protein coupled receptor 1 family. Opsin subfamily. Phosphorylated on some or all of the serine and threonine residues present in the C-terminal region. In terms of tissue distribution, in this lizard the color pigments are found in the rod-shaped photoreceptor cells which have been derived from ancestral cone-like photoreceptors.

It localises to the membrane. Visual pigments are the light-absorbing molecules that mediate vision. They consist of an apoprotein, opsin, covalently linked to cis-retinal. This is Green-sensitive opsin P521 from Gekko gecko (Tokay gecko).